The chain runs to 146 residues: Large ribosomal subunit protein uL15 (146 aa).

Basic and acidic residues predominate over residues 1 to 18; sequence MKLHELKPSEGSRKERNR. The segment at 1–50 is disordered; the sequence is MKLHELKPSEGSRKERNRVGRGTGSGNGKTSGRGHKGQKARSGGGVRLGF. Over residues 21 to 31 the composition is skewed to gly residues; it reads RGTGSGNGKTS.

It belongs to the universal ribosomal protein uL15 family. In terms of assembly, part of the 50S ribosomal subunit.

In terms of biological role, binds to the 23S rRNA. The sequence is that of Large ribosomal subunit protein uL15 from Listeria monocytogenes serotype 4b (strain CLIP80459).